Reading from the N-terminus, the 241-residue chain is Carboxy-S-adenosyl-L-methionine synthase (241 aa).

S-adenosyl-L-methionine contacts are provided by residues tyrosine 38, 63-65 (GCS), 88-89 (DN), 116-117 (DI), asparagine 131, and arginine 198.

It belongs to the class I-like SAM-binding methyltransferase superfamily. Cx-SAM synthase family. Homodimer.

It catalyses the reaction prephenate + S-adenosyl-L-methionine = carboxy-S-adenosyl-L-methionine + 3-phenylpyruvate + H2O. Functionally, catalyzes the conversion of S-adenosyl-L-methionine (SAM) to carboxy-S-adenosyl-L-methionine (Cx-SAM). In Histophilus somni (strain 2336) (Haemophilus somnus), this protein is Carboxy-S-adenosyl-L-methionine synthase.